Reading from the N-terminus, the 146-residue chain is Large ribosomal subunit protein uL15y (146 aa).

Basic residues-rich tracts occupy residues 1–14 (MATA…KRGH) and 21–30 (RIGKHRKHPG). Residues 1–38 (MATALKKNRKKRGHVSAGHGRIGKHRKHPGGRGNAGGM) are disordered.

The protein belongs to the universal ribosomal protein uL15 family.

The polypeptide is Large ribosomal subunit protein uL15y (RPL27AB) (Arabidopsis thaliana (Mouse-ear cress)).